We begin with the raw amino-acid sequence, 299 residues long: Ig alpha chain C region (299 aa).

Ig-like domains are found at residues 71–167 (PSLS…ATIS) and 174–276 (PQVH…KTID).

In terms of biological role, ig alpha is the major immunoglobulin class in body secretions. It may serve both to defend against local infection and to prevent access of foreign antigens to the general immunologic system. In Oryctolagus cuniculus (Rabbit), this protein is Ig alpha chain C region.